The following is a 146-amino-acid chain: UPF0310 protein YdcG (146 aa).

The protein belongs to the UPF0310 family.

This is UPF0310 protein YdcG (ydcG) from Bacillus subtilis (strain 168).